Reading from the N-terminus, the 86-residue chain is Putative defensin-like protein 211 (86 aa).

Positions 1-19 are cleaved as a signal peptide; the sequence is MNTIVLFLTLLILVSSCTS. 3 disulfides stabilise this stretch: Cys-55–Cys-72, Cys-58–Cys-77, and Cys-62–Cys-79.

The protein belongs to the DEFL family.

Its subcellular location is the secreted. This chain is Putative defensin-like protein 211, found in Arabidopsis thaliana (Mouse-ear cress).